A 309-amino-acid chain; its full sequence is Probable manganese-dependent inorganic pyrophosphatase (309 aa).

H9, D13, D15, D75, H97, and D149 together coordinate Mn(2+).

This sequence belongs to the PPase class C family. Mn(2+) is required as a cofactor.

The protein resides in the cytoplasm. It catalyses the reaction diphosphate + H2O = 2 phosphate + H(+). The chain is Probable manganese-dependent inorganic pyrophosphatase from Bacillus velezensis (strain DSM 23117 / BGSC 10A6 / LMG 26770 / FZB42) (Bacillus amyloliquefaciens subsp. plantarum).